The following is a 273-amino-acid chain: Dermonecrotic toxin LapSicTox-alphaIB1aiv (273 aa).

Residue His-5 is part of the active site. 2 residues coordinate Mg(2+): Glu-25 and Asp-27. Catalysis depends on His-41, which acts as the Nucleophile. 2 disulfide bridges follow: Cys-45–Cys-51 and Cys-47–Cys-190. Asp-85 is a binding site for Mg(2+). A glycan (N-linked (GlcNAc...) asparagine) is linked at Asn-250.

This sequence belongs to the arthropod phospholipase D family. Class II subfamily. The cofactor is Mg(2+). Expressed by the venom gland.

The protein resides in the secreted. It carries out the reaction an N-(acyl)-sphingosylphosphocholine = an N-(acyl)-sphingosyl-1,3-cyclic phosphate + choline. The enzyme catalyses an N-(acyl)-sphingosylphosphoethanolamine = an N-(acyl)-sphingosyl-1,3-cyclic phosphate + ethanolamine. The catalysed reaction is a 1-acyl-sn-glycero-3-phosphocholine = a 1-acyl-sn-glycero-2,3-cyclic phosphate + choline. It catalyses the reaction a 1-acyl-sn-glycero-3-phosphoethanolamine = a 1-acyl-sn-glycero-2,3-cyclic phosphate + ethanolamine. Dermonecrotic toxins cleave the phosphodiester linkage between the phosphate and headgroup of certain phospholipids (sphingolipid and lysolipid substrates), forming an alcohol (often choline) and a cyclic phosphate. This toxin acts on sphingomyelin (SM). It may also act on ceramide phosphoethanolamine (CPE), lysophosphatidylcholine (LPC) and lysophosphatidylethanolamine (LPE), but not on lysophosphatidylserine (LPS), and lysophosphatidylglycerol (LPG). It acts by transphosphatidylation, releasing exclusively cyclic phosphate products as second products. Induces dermonecrosis, hemolysis, increased vascular permeability, edema, inflammatory response, and platelet aggregation. The sequence is that of Dermonecrotic toxin LapSicTox-alphaIB1aiv from Loxosceles apachea (Apache recluse spider).